Here is a 242-residue protein sequence, read N- to C-terminus: Protein Thf1 (242 aa).

Residues 178–209 (SSDKLQKDLDLYRSNLDKMQQLLTVIEDTLEA) adopt a coiled-coil conformation. The interval 212–242 (KKRASQKLEKKPEVVEEKEHKENEEQQQSSN) is disordered. Residues 217–235 (QKLEKKPEVVEEKEHKENE) show a composition bias toward basic and acidic residues.

It belongs to the THF1 family.

In terms of biological role, may be involved in photosynthetic membrane biogenesis. The chain is Protein Thf1 from Crocosphaera subtropica (strain ATCC 51142 / BH68) (Cyanothece sp. (strain ATCC 51142)).